A 36-amino-acid chain; its full sequence is Photosystem I reaction center subunit VIII (36 aa).

A helical transmembrane segment spans residues 9-29; sequence ILTPVVTLVFPGLMFALFFVL.

The protein belongs to the PsaI family.

It is found in the plastid. It localises to the chloroplast thylakoid membrane. Functionally, may help in the organization of the PsaL subunit. The protein is Photosystem I reaction center subunit VIII of Emiliania huxleyi (Coccolithophore).